The following is a 755-amino-acid chain: MSQEPSSSFSDGFMESDFSQGSFSASDDAELSIPSEFAESVDELSSSSDNGDQGQPLTEPNNIPIDEDTVYNIWGQVVGTRRKDIGPDGSSLDMFLERHKDTNEFFRTVYDPAKGYKRANLTPEEEEMIRNVMVSRPYNDAPGLSRMNIQSTLVNKNIMRTALTSDIVGPKEKYASKAIVRKIEKLREGIERGEIVYDPNRYKVDENRGLVVGNRDLWADVDETEDPSMRIPKGRGEMYMNPTKPKLPGHALSYNPPLEYLNIDGDGSQQKLQSLRQIKTYTNFVKDQFDRCVTLYLNPRQRLRKEEDMDSMLPTLPNRSLLTPYPTFCAMTIRTGTRRINGLTFSPKGMFFAVGGRDCILRVFETYSGRQVRAIPVLSTKKLEKKSINFLNLEINCCKWCPRTDVSIIAVCAGDELIFVDAGICESGNYNEVRERTRFLLNARPETTQPCPHMAWEMHAGVTSGGKSYASGFVTQVSSNAYNEGSEDDDAAESARFNEERHQRGHEGQIDADVYTVYTRLNQFVLLRIHHTHLVSFCNWHFQGDYIVTVCTDDKSRAKVTLHQLSKWHSLSPFNRLKSKIIGAHFRTKKSELIVVSERSSRIYNLLTGDKLSTLYPGVKQVTASGMGYGDNFITGSADSQCALFANAAGPEPTAKLCYHTSTIRNIDVHPCGGLVATCSDDGIVQISRIVDASLVKMHPGQFDEKLYNRMIPCVVLNRRRQAADGSVGISRVTWHPRQPWLLCSGTDGVLRLFK.

Composition is skewed to polar residues over residues methionine 1–serine 10 and glutamate 43–asparagine 61. A disordered region spans residues methionine 1–isoleucine 65. The segment at methionine 309–phenylalanine 754 is interaction with EB1. Residues threonine 335–alanine 374 form a WD 1 repeat. The segment at tyrosine 482–glycine 505 is disordered. A compositionally biased stretch (basic and acidic residues) spans arginine 496–glycine 505. WD repeat units follow at residues proline 617–alanine 655, tyrosine 659–methionine 698, and aspartate 725–lysine 755.

This sequence belongs to the WD repeat BOP1/ERB1 family. In terms of assembly, interacts (via C-terminal WD repeats) with giardin subunit beta. Interacts (via C-terminal WD repeats) with EB1.

The protein localises to the nucleus. The protein resides in the nucleolus. It is found in the nucleus membrane. Functionally, required for maturation of ribosomal RNAs and formation of the large ribosomal subunit. The chain is Ribosome biogenesis protein BOP1 from Giardia intestinalis (Giardia lamblia).